The primary structure comprises 334 residues: N-chimaerin (334 aa).

Polar residues predominate over residues 1–10; sequence MPSKESWSGR. A disordered region spans residues 1-22; it reads MPSKESWSGRKTNRATVHKSKQ. T67 is subject to Phosphothreonine. A Phorbol-ester/DAG-type zinc finger spans residues 80–130; the sequence is VHNFKVHTFRGPHWCEYCANFMWGLIAQGVKCADCGLNVHKQCSKMVPNDC. The 192-residue stretch at 143–334 folds into the Rho-GAP domain; it reads CDLTTLVKAR…LLIKNEDILF (192 aa). The residue at position 215 (T215) is a Phosphothreonine.

Interacts with EPHA4; effector of EPHA4 in axon guidance linking EPHA4 activation to RAC1 regulation. In terms of processing, phosphorylated. Phosphorylation is EPHA4 kinase activity-dependent.

GTPase-activating protein for p21-rac and a phorbol ester receptor. Involved in the assembly of neuronal locomotor circuits as a direct effector of EPHA4 in axon guidance. The polypeptide is N-chimaerin (CHN1) (Bos taurus (Bovine)).